The primary structure comprises 464 residues: ATP synthase subunit beta (464 aa).

152 to 159 (GGAGVGKT) is a binding site for ATP.

It belongs to the ATPase alpha/beta chains family. As to quaternary structure, F-type ATPases have 2 components, CF(1) - the catalytic core - and CF(0) - the membrane proton channel. CF(1) has five subunits: alpha(3), beta(3), gamma(1), delta(1), epsilon(1). CF(0) has three main subunits: a(1), b(2) and c(9-12). The alpha and beta chains form an alternating ring which encloses part of the gamma chain. CF(1) is attached to CF(0) by a central stalk formed by the gamma and epsilon chains, while a peripheral stalk is formed by the delta and b chains.

The protein localises to the cell membrane. The catalysed reaction is ATP + H2O + 4 H(+)(in) = ADP + phosphate + 5 H(+)(out). Functionally, produces ATP from ADP in the presence of a proton gradient across the membrane. The catalytic sites are hosted primarily by the beta subunits. This chain is ATP synthase subunit beta, found in Clostridioides difficile (strain 630) (Peptoclostridium difficile).